Here is a 242-residue protein sequence, read N- to C-terminus: Glutamate transport ATP-binding protein GluA (242 aa).

The 235-residue stretch at Ile2–Leu236 folds into the ABC transporter domain. Gly34 to Ser41 is an ATP binding site.

This sequence belongs to the ABC transporter superfamily. The complex is composed of two ATP-binding proteins (GluA), two transmembrane proteins (GluC and GluD) and a solute-binding protein (GluB).

It is found in the cell membrane. The catalysed reaction is a polar amino acid(out) + ATP + H2O = a polar amino acid(in) + ADP + phosphate + H(+). The enzyme catalyses L-glutamate(out) + ATP + H2O = L-glutamate(in) + ADP + phosphate + H(+). Part of the ABC transporter complex GluABCD involved in glutamate uptake. Probably responsible for energy coupling to the transport system. This chain is Glutamate transport ATP-binding protein GluA, found in Corynebacterium glutamicum (strain ATCC 13032 / DSM 20300 / JCM 1318 / BCRC 11384 / CCUG 27702 / LMG 3730 / NBRC 12168 / NCIMB 10025 / NRRL B-2784 / 534).